Here is a 121-residue protein sequence, read N- to C-terminus: MYILFTLVLTFVFCKPIHSLQCYNCSHSTMQCTTSTSCTSNLDSCLIAKAGSGVYYRCWKFDDCSFKRISNQLSETQLKYHCCKKNLCNVNKGIENIKRTISDKALLLLALFLVTAWNFPL.

Residues 1–19 form the signal peptide; the sequence is MYILFTLVLTFVFCKPIHS. The UPAR/Ly6 domain maps to 20 to 104; it reads LQCYNCSHST…ENIKRTISDK (85 aa). Cystine bridges form between cysteine 22–cysteine 45, cysteine 25–cysteine 32, cysteine 38–cysteine 58, cysteine 64–cysteine 82, and cysteine 83–cysteine 88. N-linked (GlcNAc...) asparagine; by host glycosylation occurs at asparagine 24. A lipid anchor (GPI-anchor amidated asparagine; by host) is attached at asparagine 96. A propeptide spans 97 to 121 (removed in mature form); sequence IKRTISDKALLLLALFLVTAWNFPL.

It localises to the host cell membrane. The polypeptide is Surface glycoprotein CD59 homolog (15) (Saimiriine herpesvirus 2 (strain 11) (SaHV-2)).